Here is a 704-residue protein sequence, read N- to C-terminus: Probable serine/threonine-protein kinase WNK1 (704 aa).

The region spanning 27–284 (GRYNDVLGKG…ARELLKDPFL (258 aa)) is the Protein kinase domain. Residues 107 to 110 (TEMF) and K157 contribute to the ATP site. Residue D174 is the Proton acceptor of the active site. Residues 499 to 521 (QTDLQDSGGSSDDGGGQTQHVKD) form a disordered region.

The protein belongs to the protein kinase superfamily. Ser/Thr protein kinase family. WNK subfamily.

It carries out the reaction L-seryl-[protein] + ATP = O-phospho-L-seryl-[protein] + ADP + H(+). It catalyses the reaction L-threonyl-[protein] + ATP = O-phospho-L-threonyl-[protein] + ADP + H(+). The chain is Probable serine/threonine-protein kinase WNK1 (WNK1) from Oryza sativa subsp. japonica (Rice).